The chain runs to 204 residues: Superoxide dismutase [Mn] (204 aa).

H27 serves as a coordination point for Mn(2+). 2 positions are modified to phosphothreonine: T34 and T70. Mn(2+) is bound by residues H82, D164, and H168.

This sequence belongs to the iron/manganese superoxide dismutase family. As to quaternary structure, homodimer. Mn(2+) serves as cofactor.

It catalyses the reaction 2 superoxide + 2 H(+) = H2O2 + O2. Its function is as follows. Destroys superoxide anion radicals which are normally produced within the cells and which are toxic to biological systems. The sequence is that of Superoxide dismutase [Mn] (sodA) from Bacillus caldotenax.